The primary structure comprises 111 residues: Rho GDP-dissociation inhibitor 1 (111 aa).

Residues K57 and K60 each participate in a glycyl lysine isopeptide (Lys-Gly) (interchain with G-Cter in SUMO1); alternate cross-link. Residues K57 and K60 each participate in a glycyl lysine isopeptide (Lys-Gly) (interchain with G-Cter in SUMO2); alternate cross-link. N6-acetyllysine; alternate is present on K60. An N6-succinyllysine; alternate modification is found at K60.

It belongs to the Rho GDI family. As to quaternary structure, monomer. Interacts with FER. Interacts with PLXNB3. Forms a heterodimer with RAC1. Interacts with RHOA, the affinity is increased by three orders of magnitude when RHOA is prenylated. Interacts with PSMD10; the interaction increases ARHGDIA association with RHOA, leading to ARHGDIA-mediated inactivation of RHOA and ROCK and prolonged AKT activation. Interacts with KANK2; the interaction is direct and may regulate the interaction of ARHGDIA with RHOA, RAC1 and CDC42. Interacts with RHOC. Interacts with CDC42. Interacts with NGFR (via death domain); NGFR binding decreases the affinity for RHOA. Post-translationally, the N-terminus is blocked.

Its subcellular location is the cytoplasm. Its function is as follows. Controls Rho proteins homeostasis. Regulates the GDP/GTP exchange reaction of the Rho proteins by inhibiting the dissociation of GDP from them, and the subsequent binding of GTP to them. Retains Rho proteins such as CDC42, RAC1 and RHOA in an inactive cytosolic pool, regulating their stability and protecting them from degradation. Actively involved in the recycling and distribution of activated Rho GTPases in the cell, mediates extraction from membranes of both inactive and activated molecules due its exceptionally high affinity for prenylated forms. Through the modulation of Rho proteins, may play a role in cell motility regulation. In glioma cells, inhibits cell migration and invasion by mediating the signals of SEMA5A and PLXNB3 that lead to inactivation of RAC1. The protein is Rho GDP-dissociation inhibitor 1 (ARHGDIA) of Cavia porcellus (Guinea pig).